Reading from the N-terminus, the 4391-residue chain is Basement membrane-specific heparan sulfate proteoglycan core protein (4391 aa).

The first 21 residues, 1 to 21, serve as a signal peptide directing secretion; sequence MGWRAAGALLLALLLHGRLLA. O-linked (GalNAc...) threonine glycosylation occurs at Thr42. O-linked (Xyl...) (heparan sulfate) serine glycosylation is found at Ser65, Ser71, and Ser76. One can recognise an SEA domain in the interval 80–191; it reads QMVYFRALVN…QGFQFRRLGT (112 aa). An N-linked (GlcNAc...) asparagine glycan is attached at Asn89. LDL-receptor class A domains are found at residues 198-235, 284-320, 324-360, and 367-404; these read ACTE…LNCE, PCGP…LDCG, PCEP…ANCP, and VCGP…FGCM. Intrachain disulfides connect Cys199/Cys212, Cys206/Cys225, Cys219/Cys234, Cys285/Cys297, Cys292/Cys310, Cys304/Cys319, Cys325/Cys337, Cys332/Cys350, Cys344/Cys359, Cys368/Cys381, Cys375/Cys394, and Cys388/Cys403. Residues 405–504 enclose the Ig-like C2-type 1 domain; it reads PPQVVTPPRE…VLELVPQRGP (100 aa). The Laminin EGF-like 1; first part domain occupies 521 to 530; that stretch reads CFCFGITSVC. Residues 538 to 730 enclose the Laminin IV type A 1 domain; it reads DQIRLRFDQP…SHGRAHSVEE (193 aa). Residue Asn554 is glycosylated (N-linked (GlcNAc...) asparagine). A Laminin EGF-like 1; second part domain is found at 731 to 763; that stretch reads CRCPIGYSGLSCESCDAHFTRVPGGPYLGTCSG. 11 disulfide bridges follow: Cys764–Cys773, Cys766–Cys780, Cys783–Cys792, Cys795–Cys811, Cys814–Cys829, Cys816–Cys839, Cys842–Cys851, Cys854–Cys869, Cys879–Cys892, Cys894–Cys903, and Cys906–Cys921. 2 Laminin EGF-like domains span residues 764–813 and 814–871; these read CNCN…SCRP and CPCP…KCRP. In terms of domain architecture, Laminin EGF-like 4; truncated spans 879–923; sequence CDERGSMGTSGEACRCKNNVVGRLCNECADGSFHLSTRNPDGCLK. In terms of domain architecture, Laminin EGF-like 5; first part spans 924–933; that stretch reads CFCMGVSRHC. Positions 941 to 1125 constitute a Laminin IV type A 2 domain; the sequence is AQLHGASEEP…GQDPALEVEQ (185 aa). The Laminin EGF-like 5; second part domain maps to 1126 to 1158; the sequence is CSCPPGYRGPSCQDCDTGYTRTPSGLYLGTCER. Cystine bridges form between Cys1159–Cys1168, Cys1161–Cys1175, Cys1178–Cys1187, Cys1190–Cys1206, Cys1209–Cys1224, Cys1211–Cys1234, Cys1237–Cys1246, Cys1249–Cys1263, Cys1275–Cys1287, Cys1277–Cys1293, Cys1295–Cys1304, and Cys1307–Cys1322. 3 Laminin EGF-like domains span residues 1159–1208, 1209–1265, and 1275–1324; these read CSCH…DCQL, CPCY…PCQR, and CNCD…GCLP. The 10-residue stretch at 1325 to 1334 folds into the Laminin EGF-like 9; first part domain; that stretch reads CFCMGITQQC. Residues 1344–1529 enclose the Laminin IV type A 3 domain; the sequence is ISTHFAPGDF…NRPRALEVEE (186 aa). One can recognise a Laminin EGF-like 9; second part domain in the interval 1530 to 1562; it reads CRCPPGYIGLSCQDCAPGYTRTGSGLYLGHCEL. 8 disulfides stabilise this stretch: Cys1563/Cys1572, Cys1565/Cys1579, Cys1582/Cys1591, Cys1594/Cys1610, Cys1613/Cys1628, Cys1615/Cys1638, Cys1641/Cys1650, and Cys1653/Cys1668. Laminin EGF-like domains are found at residues 1563 to 1612 and 1613 to 1670; these read CECN…DCQP and CACP…QCLP. 21 consecutive Ig-like C2-type domains span residues 1677–1771, 1772–1865, 1866–1955, 1956–2051, 2052–2151, 2152–2244, 2245–2340, 2341–2436, 2437–2533, 2534–2629, 2630–2726, 2727–2826, 2827–2924, 2925–3021, 3022–3112, 3113–3211, 3212–3298, 3299–3399, 3400–3488, 3489–3574, and 3575–3662; these read LVVE…SKPI, TVTV…TLSA, PVVS…GGGG, PRVQ…ASPP, PVKI…PGST, RPIR…PGPI, PPVR…AGST, QPIR…LGVT, PTVR…QGVA, YPVR…PSVS, PPIR…PGSS, MPIR…PGGA, PPIR…PGLA, QPIY…RLRS, PVIS…HGPP, TVSV…APGA, PQVQ…VESP, PYAT…AGST, PTVQ…ALPS, VLIN…LVQA, and LPQI…PERV. N-linked (GlcNAc...) asparagine glycosylation is present at Asn1755. A glycan (N-linked (GlcNAc...) asparagine) is linked at Asn2121. The tract at residues 2994 to 3014 is disordered; sequence ASGPGPEQEASFTVTVPPSEG. O-linked (Xyl...) (chondroitin sulfate) serine glycosylation occurs at Ser2995. A compositionally biased stretch (polar residues) spans 3003–3014; the sequence is ASFTVTVPPSEG. Asn3072 and Asn3105 each carry an N-linked (GlcNAc...) asparagine glycan. A glycan (N-linked (GlcNAc...) asparagine) is linked at Asn3279. A Laminin G-like 1 domain is found at 3663–3843; the sequence is VPYFTQTPYS…DLNLTAHGIS (181 aa). N-linked (GlcNAc...) asparagine glycans are attached at residues Asn3780 and Asn3836. Intrachain disulfides connect Cys3819–Cys3845, Cys3848–Cys3859, Cys3853–Cys3869, Cys3871–Cys3880, Cys3888–Cys3899, Cys3893–Cys3910, and Cys3912–Cys3921. EGF-like domains lie at 3844-3881 and 3884-3922; these read HCPT…SRCE and QALH…LRCE. The Laminin G-like 2 domain occupies 3928-4103; sequence TTPSLSGAGS…LGSQGIGQCY (176 aa). Ser3933 carries O-linked (Xyl...) (chondroitin sulfate) serine glycosylation. Asn4068 carries an N-linked (GlcNAc...) asparagine glycan. Intrachain disulfides connect Cys4076-Cys4102, Cys4108-Cys4119, Cys4113-Cys4129, Cys4131-Cys4140, Cys4147-Cys4159, Cys4153-Cys4164, and Cys4166-Cys4175. 2 EGF-like domains span residues 4104 to 4141 and 4143 to 4176; these read DSSP…DLCE and EENP…PRCQ. The mediates motor neuron attachment stretch occupies residues 4149 to 4151; the sequence is LRE. Residues Ser4179 and Ser4193 are each glycosylated (O-linked (Xyl...) (chondroitin sulfate) serine). Residues 4201–4389 enclose the Laminin G-like 3 domain; sequence QYGAYFHDDG…AQAGANTRPC (189 aa). Ca(2+) contacts are provided by Asp4258 and Leu4275. The tract at residues 4299-4301 is mediates motor neuron attachment; the sequence is LRE. The Ca(2+) site is built by Ala4325 and Asn4327. Cys4355 and Cys4389 are joined by a disulfide. Positions 4364 to 4391 are disordered; that stretch reads ARPGAPPPQPLDLQHRAQAGANTRPCPS.

As to quaternary structure, has a strong tendency to aggregate in dimers or stellate structures. Interacts with other basement membrane components such as laminin, prolargin and collagen type IV. Interacts with COL13A1. Interacts with FGFBP1. Interacts with VWA1. Interacts (via C-terminus) with ECM1 (via C-terminus). Interacts with SVEP1. Post-translationally, proteolytic processing produces the C-terminal angiogenic peptide, endorepellin. This peptide can be further processed to produce the LG3 peptide. O-glycosylated with core 1 or possibly core 8 glycans. Contains three heparan sulfate chains. Also contains chondroitin sulfate. As to expression, detected in cerebrospinal fluid, fibroblasts and urine (at protein level).

Its subcellular location is the secreted. The protein resides in the extracellular space. It localises to the extracellular matrix. It is found in the basement membrane. Its function is as follows. Integral component of basement membranes. Component of the glomerular basement membrane (GBM), responsible for the fixed negative electrostatic membrane charge, and which provides a barrier which is both size- and charge-selective. It serves as an attachment substrate for cells. Plays essential roles in vascularization. Critical for normal heart development and for regulating the vascular response to injury. Also required for avascular cartilage development. In terms of biological role, anti-angiogenic and anti-tumor peptide that inhibits endothelial cell migration, collagen-induced endothelial tube morphogenesis and blood vessel growth in the chorioallantoic membrane. Blocks endothelial cell adhesion to fibronectin and type I collagen. Anti-tumor agent in neovascularization. Interaction with its ligand, integrin alpha2/beta1, is required for the anti-angiogenic properties. Evokes a reduction in phosphorylation of receptor tyrosine kinases via alpha2/beta1 integrin-mediated activation of the tyrosine phosphatase, PTPN6. Has anti-angiogenic properties that require binding of calcium ions for full activity. The polypeptide is Basement membrane-specific heparan sulfate proteoglycan core protein (HSPG2) (Homo sapiens (Human)).